The chain runs to 490 residues: Kinetochore protein Nuf2 homolog (490 aa).

Coiled coils occupy residues Asp-146–Ala-280 and Asp-310–Ile-407. Disordered regions lie at residues Gln-346–Gln-365 and Ile-468–Lys-490.

It belongs to the NUF2 family. As to quaternary structure, component of the NDC80 complex, which is composed of at least ndc-80 and him-10. The NDC80 complex interacts with knl-1.

Its subcellular location is the nucleus. The protein localises to the chromosome. The protein resides in the centromere. It is found in the kinetochore. Its function is as follows. Acts as a component of the essential kinetochore-associated NDC80 complex, which is required for chromosome segregation in mitosis and meiosis and spindle checkpoint activity. The ndc-80 complex synergistically enhances the affinity of the ska-1 complex for microtubules and may allow the ndc-80 complex to track depolymerizing microtubules. This is Kinetochore protein Nuf2 homolog (him-10) from Caenorhabditis elegans.